Here is a 642-residue protein sequence, read N- to C-terminus: Bud site selection protein 5 (642 aa).

The N-terminal Ras-GEF domain maps to 224 to 339 (EVFRIQLYLN…DIVQLFINKK (116 aa)). A Ras-GEF domain is found at 412-640 (SPWSLAKTLT…YQVSIAKVPR (229 aa)).

Interacts with AXL2, BEM1, GSP1 and in haploid cells with AXL1.

It localises to the bud neck. The protein resides in the cytoplasm. The protein localises to the cell cortex. Functionally, GDP-GTP exchange factor (GEF) for the small GTPase BUD1/RSR1. Regulates the activity of BUD1 together with BUD2 which is a GTPase-activating protein (GAP) of BUD1. Required to produce both the axial and bipolar patterns of bud site selection. Determines the orientation of division axis. Overexpression can suppress mutations in PRP20 which is the GEF for GSP1. May be a cytoplasmic GEF for GSP1. Might also act on the Ras-like protein CDC42. Appears to bind to Ras proteins but not to activate them. This is Bud site selection protein 5 (BUD5) from Saccharomyces cerevisiae (strain ATCC 204508 / S288c) (Baker's yeast).